The sequence spans 867 residues: Leucine--tRNA ligase (867 aa).

Residues 42–52 carry the 'HIGH' region motif; the sequence is PYPSGNLHMGH. The 'KMSKS' region motif lies at 625 to 629; sequence KMSKS. Position 628 (lysine 628) interacts with ATP.

It belongs to the class-I aminoacyl-tRNA synthetase family.

Its subcellular location is the cytoplasm. The enzyme catalyses tRNA(Leu) + L-leucine + ATP = L-leucyl-tRNA(Leu) + AMP + diphosphate. This chain is Leucine--tRNA ligase, found in Blochmanniella floridana.